Here is a 1058-residue protein sequence, read N- to C-terminus: Isoleucine--tRNA ligase (1058 aa).

The 'HIGH' region signature appears at 48-58 (PYTTGHIHLGT). Positions 596-600 (KMSKS) match the 'KMSKS' region motif. Residue Lys-599 coordinates ATP.

Belongs to the class-I aminoacyl-tRNA synthetase family. IleS type 2 subfamily. In terms of assembly, monomer. Requires Zn(2+) as cofactor.

The protein resides in the cytoplasm. It carries out the reaction tRNA(Ile) + L-isoleucine + ATP = L-isoleucyl-tRNA(Ile) + AMP + diphosphate. Its function is as follows. Catalyzes the attachment of isoleucine to tRNA(Ile). As IleRS can inadvertently accommodate and process structurally similar amino acids such as valine, to avoid such errors it has two additional distinct tRNA(Ile)-dependent editing activities. One activity is designated as 'pretransfer' editing and involves the hydrolysis of activated Val-AMP. The other activity is designated 'posttransfer' editing and involves deacylation of mischarged Val-tRNA(Ile). The protein is Isoleucine--tRNA ligase of Methanosarcina acetivorans (strain ATCC 35395 / DSM 2834 / JCM 12185 / C2A).